A 562-amino-acid chain; its full sequence is Formate--tetrahydrofolate ligase (562 aa).

An ATP-binding site is contributed by 70-77; sequence TPAGEGKS.

Belongs to the formate--tetrahydrofolate ligase family.

It catalyses the reaction (6S)-5,6,7,8-tetrahydrofolate + formate + ATP = (6R)-10-formyltetrahydrofolate + ADP + phosphate. Its pathway is one-carbon metabolism; tetrahydrofolate interconversion. This chain is Formate--tetrahydrofolate ligase, found in Paenarthrobacter aurescens (strain TC1).